Consider the following 369-residue polypeptide: Anhydro-N-acetylmuramic acid kinase (369 aa).

12–19 (GTSMDGVD) provides a ligand contact to ATP.

It belongs to the anhydro-N-acetylmuramic acid kinase family.

It carries out the reaction 1,6-anhydro-N-acetyl-beta-muramate + ATP + H2O = N-acetyl-D-muramate 6-phosphate + ADP + H(+). It functions in the pathway amino-sugar metabolism; 1,6-anhydro-N-acetylmuramate degradation. It participates in cell wall biogenesis; peptidoglycan recycling. Its function is as follows. Catalyzes the specific phosphorylation of 1,6-anhydro-N-acetylmuramic acid (anhMurNAc) with the simultaneous cleavage of the 1,6-anhydro ring, generating MurNAc-6-P. Is required for the utilization of anhMurNAc either imported from the medium or derived from its own cell wall murein, and thus plays a role in cell wall recycling. This chain is Anhydro-N-acetylmuramic acid kinase, found in Shewanella putrefaciens (strain CN-32 / ATCC BAA-453).